Reading from the N-terminus, the 214-residue chain is Protein PsaE (214 aa).

Positions 1-24 are cleaved as a signal peptide; it reads MSHCVVLNKLESVLIIGDSRYALS. The segment at residues 1-94 is a DNA-binding region (ompR/PhoB-type); that stretch reads MSHCVVLNKL…YKNEGYSYQK (94 aa).

In terms of biological role, required for expression of pH 6 antigen. In Yersinia pseudotuberculosis serotype I (strain IP32953), this protein is Protein PsaE (psaE).